A 377-amino-acid chain; its full sequence is tRNA(Met) cytidine acetate ligase (377 aa).

ATP contacts are provided by residues 7 to 20 (ITEY…HLFH), Gly100, Asn153, and Arg178.

The protein belongs to the TmcAL family.

The protein resides in the cytoplasm. The catalysed reaction is cytidine(34) in elongator tRNA(Met) + acetate + ATP = N(4)-acetylcytidine(34) in elongator tRNA(Met) + AMP + diphosphate. In terms of biological role, catalyzes the formation of N(4)-acetylcytidine (ac(4)C) at the wobble position of elongator tRNA(Met), using acetate and ATP as substrates. First activates an acetate ion to form acetyladenylate (Ac-AMP) and then transfers the acetyl group to tRNA to form ac(4)C34. The polypeptide is tRNA(Met) cytidine acetate ligase (Staphylococcus epidermidis (strain ATCC 12228 / FDA PCI 1200)).